The following is a 920-amino-acid chain: Probable transport protein MmpL7 (920 aa).

The next 12 helical transmembrane spans lie at Leu44–Thr64, Ile210–Leu230, Ala241–Val261, Val271–Leu291, Leu311–Ala331, Leu344–Ala364, Ser389–Met409, Leu761–Met781, Ala790–Trp810, Val822–Ile842, Gly864–Ser884, and Phe888–Val908.

This sequence belongs to the resistance-nodulation-cell division (RND) (TC 2.A.6) family. MmpL subfamily.

The protein localises to the cell membrane. The sequence is that of Probable transport protein MmpL7 (mmpL7) from Mycobacterium bovis (strain ATCC BAA-935 / AF2122/97).